A 296-amino-acid chain; its full sequence is 33 kDa chaperonin (296 aa).

Intrachain disulfides connect Cys-238/Cys-240 and Cys-271/Cys-274.

Belongs to the HSP33 family. Post-translationally, under oxidizing conditions two disulfide bonds are formed involving the reactive cysteines. Under reducing conditions zinc is bound to the reactive cysteines and the protein is inactive.

The protein localises to the cytoplasm. Its function is as follows. Redox regulated molecular chaperone. Protects both thermally unfolding and oxidatively damaged proteins from irreversible aggregation. Plays an important role in the bacterial defense system toward oxidative stress. This is 33 kDa chaperonin from Clostridium botulinum (strain Loch Maree / Type A3).